The chain runs to 103 residues: Large ribosomal subunit protein bL21 (103 aa).

Belongs to the bacterial ribosomal protein bL21 family. Part of the 50S ribosomal subunit. Contacts protein L20.

In terms of biological role, this protein binds to 23S rRNA in the presence of protein L20. The chain is Large ribosomal subunit protein bL21 from Shewanella sp. (strain MR-7).